We begin with the raw amino-acid sequence, 174 residues long: Co-chaperone protein HscB homolog (174 aa).

One can recognise a J domain in the interval 2–74 (NYFELFKFSP…IRRAEHMLSL (73 aa)).

This sequence belongs to the HscB family. As to quaternary structure, interacts with HscA and stimulates its ATPase activity.

Its function is as follows. Co-chaperone involved in the maturation of iron-sulfur cluster-containing proteins. Seems to help targeting proteins to be folded toward HscA. In Shewanella sp. (strain ANA-3), this protein is Co-chaperone protein HscB homolog.